Consider the following 334-residue polypeptide: N-acetylmuramoyl-L-alanine amidase sle1 (334 aa).

The first 25 residues, 1-25 (MQKKVIAAIIGTSAISAVAATQANA), serve as a signal peptide directing secretion. In terms of domain architecture, LysM 1 spans 27–70 (TTHTVKPGESVWAISNKYGISIAKLKSLNNLTSNLIFPNQVLKV). A compositionally biased stretch (low complexity) spans 71–86 (SGSSNSTSNSSRPSTN). The segment at 71–90 (SGSSNSTSNSSRPSTNSGGG) is disordered. Residues 91–134 (SYYTVQAGDSLSLIASKYGTTYQNIMRLNGLNNFFIYPGQKLKV) enclose the LysM 2 domain. Residues 137-156 (TASSSNSTSNSSRPSTNSSG) are disordered. A LysM 3 domain is found at 158 to 201 (SYYTVQAGDSLSLIASKYGTTYQNIMRLNGLNNFFIYPGQKLKV). Residues 210–334 (GSTTTTNRGY…YQVNNYRYIH (125 aa)) enclose the Peptidase C51 domain.

It localises to the secreted. The protein resides in the cell surface. The catalysed reaction is Hydrolyzes the link between N-acetylmuramoyl residues and L-amino acid residues in certain cell-wall glycopeptides.. Functionally, peptidoglycan hydrolase involved in the splitting of the septum during cell division. In Staphylococcus aureus (strain MRSA252), this protein is N-acetylmuramoyl-L-alanine amidase sle1 (sle1).